We begin with the raw amino-acid sequence, 540 residues long: Phosphoenolpyruvate carboxykinase (ATP) (540 aa).

Arg65 is a substrate binding site. Lys87 carries the N6-acetyllysine modification. The substrate site is built by Tyr207 and Lys213. ATP contacts are provided by residues Lys213, His232, and 248–256 (GLSGTGKTT). Mn(2+)-binding residues include Lys213 and His232. Asp269 lines the Mn(2+) pocket. ATP contacts are provided by residues Glu297, Arg333, 449–450 (RI), and Thr455. Arg333 is a binding site for substrate. At Lys523 the chain carries N6-acetyllysine.

Belongs to the phosphoenolpyruvate carboxykinase (ATP) family. In terms of assembly, monomer. The cofactor is Mn(2+).

It localises to the cytoplasm. It catalyses the reaction oxaloacetate + ATP = phosphoenolpyruvate + ADP + CO2. It functions in the pathway carbohydrate biosynthesis; gluconeogenesis. Its function is as follows. Involved in the gluconeogenesis. Catalyzes the conversion of oxaloacetate (OAA) to phosphoenolpyruvate (PEP) through direct phosphoryl transfer between the nucleoside triphosphate and OAA. This is Phosphoenolpyruvate carboxykinase (ATP) from Escherichia coli O7:K1 (strain IAI39 / ExPEC).